Reading from the N-terminus, the 130-residue chain is Small ribosomal subunit protein uS8y (130 aa).

Belongs to the universal ribosomal protein uS8 family.

This is Small ribosomal subunit protein uS8y (RPS15AC) from Arabidopsis thaliana (Mouse-ear cress).